The following is a 179-amino-acid chain: Ribosome maturation factor RimM (179 aa).

A PRC barrel domain is found at 101–179 (EGEVYVHDLC…VELMHRWILE (79 aa)).

This sequence belongs to the RimM family. In terms of assembly, binds ribosomal protein uS19.

It localises to the cytoplasm. Its function is as follows. An accessory protein needed during the final step in the assembly of 30S ribosomal subunit, possibly for assembly of the head region. Essential for efficient processing of 16S rRNA. May be needed both before and after RbfA during the maturation of 16S rRNA. It has affinity for free ribosomal 30S subunits but not for 70S ribosomes. In Treponema denticola (strain ATCC 35405 / DSM 14222 / CIP 103919 / JCM 8153 / KCTC 15104), this protein is Ribosome maturation factor RimM.